A 641-amino-acid polypeptide reads, in one-letter code: 1-phosphatidylinositol 4,5-bisphosphate phosphodiesterase zeta-1 (641 aa).

Positions 35–70 constitute an EF-hand domain; the sequence is CSYIHVKRIFKDNDRLKQGRITIEEFRAIYRILTHR. One can recognise a PI-PLC X-box domain in the interval 155 to 299; the sequence is QDMTHPLNDY…LKFKVLVKNK (145 aa). Catalysis depends on residues His170 and His215. A PI-PLC Y-box domain is found at 382–498; that stretch reads LSDLVIYTKA…GYILKPHFLR (117 aa). The C2 domain maps to 498 to 622; sequence RESESYFNPS…KGYRRVPLFS (125 aa).

Interacts via its C2 domain with PtdIns(3)P and, to a lesser extent, PtdIns(5)P in vitro. Ca(2+) serves as cofactor.

It is found in the nucleus. Its subcellular location is the cytoplasm. The protein localises to the perinuclear region. It catalyses the reaction a 1,2-diacyl-sn-glycero-3-phospho-(1D-myo-inositol-4,5-bisphosphate) + H2O = 1D-myo-inositol 1,4,5-trisphosphate + a 1,2-diacyl-sn-glycerol + H(+). The production of the second messenger molecules diacylglycerol (DAG) and inositol 1,4,5-trisphosphate (IP3) is mediated by activated phosphatidylinositol-specific phospholipase C enzymes. In vitro, hydrolyzes PtdIns(4,5)P2 in a Ca(2+)-dependent manner. Triggers intracellular Ca(2+) oscillations in oocytes solely during M phase and is involved in inducing oocyte activation and initiating embryonic development up to the blastocyst stage. Is therefore a strong candidate for the egg-activating soluble sperm factor that is transferred from the sperm into the egg cytoplasm following gamete membrane fusion. May exert an inhibitory effect on phospholipase-C-coupled processes that depend on calcium ions and protein kinase C, including CFTR trafficking and function. This Macaca fascicularis (Crab-eating macaque) protein is 1-phosphatidylinositol 4,5-bisphosphate phosphodiesterase zeta-1.